Consider the following 346-residue polypeptide: MASLGGDNSQAEGAEVRHVPVLIAEVIDALKPAPGAVIVDGTFGAGGYTRRILETGADVIAIDRDPTAIEAGRAMEKEFPGRLNLVESRFSALDEAVARMSGAGKKVDGVVLDIGVSSMQIDEAERGFSFQKDGPLDMRMSSRGPSAADAVNRLKTGDLARIFNFLGEERHAGRIARMIEKRRAAKPFTRTLDLANAIETLVGRNPKDRIHPATRVFQALRVYVNDELGELARALLAAERILKPGGRLVVVTFHSLEDRMVKRFFADRAGGSAGSRHMPETHMRLPSFTPAVKGAVGPTPEEEERNPRARSAKLRAGIRTENPPLEDDLSLFGLPKLPETNELARS.

S-adenosyl-L-methionine-binding positions include 46–48 (GGY), aspartate 63, phenylalanine 90, aspartate 113, and glutamine 120. Residues 270-346 (GGSAGSRHMP…LPETNELARS (77 aa)) form a disordered region.

Belongs to the methyltransferase superfamily. RsmH family.

It localises to the cytoplasm. It catalyses the reaction cytidine(1402) in 16S rRNA + S-adenosyl-L-methionine = N(4)-methylcytidine(1402) in 16S rRNA + S-adenosyl-L-homocysteine + H(+). Its function is as follows. Specifically methylates the N4 position of cytidine in position 1402 (C1402) of 16S rRNA. In Brucella abortus (strain S19), this protein is Ribosomal RNA small subunit methyltransferase H.